The primary structure comprises 37 residues: Large ribosomal subunit protein bL36 (37 aa).

The protein belongs to the bacterial ribosomal protein bL36 family.

The polypeptide is Large ribosomal subunit protein bL36 (Listeria innocua serovar 6a (strain ATCC BAA-680 / CLIP 11262)).